We begin with the raw amino-acid sequence, 234 residues long: Gene 53 protein (234 aa).

This is Gene 53 protein (53) from Mycobacterium phage L5 (Mycobacteriophage L5).